Reading from the N-terminus, the 417-residue chain is Putative F-box protein At4g21240 (417 aa).

The span at 1 to 12 shows a compositional bias: acidic residues; sequence MDRREEEEEETG. The interval 1 to 25 is disordered; the sequence is MDRREEEEEETGYGEKGTRNQSKED. Basic and acidic residues predominate over residues 16–25; sequence KGTRNQSKED. Residues 30–76 enclose the F-box domain; the sequence is GKIFELIPLDMIPDILLRLPAKSAVRFRIVSKLWLSITTRPYFIRSF.

This chain is Putative F-box protein At4g21240, found in Arabidopsis thaliana (Mouse-ear cress).